A 291-amino-acid polypeptide reads, in one-letter code: Mitochondrial thiamine pyrophosphate carrier 1 (291 aa).

Helical transmembrane passes span 12–31 (GATASVYHTLVAGSVSGAVA), 83–99 (IMYILYGATQFTSYSMF), 120–141 (SLIVGTSAGLTSLIVTYPFDLL), 167–191 (GGLAGLYMGAKPTLLSLGLNSGLMF), 214–230 (FCGFFAGASSKGITFPL), and 265–282 (GFGISLIKTAPTSAVSLF). Solcar repeat units follow at residues 15–102 (ASVY…FSKA), 115–200 (RPSN…AREV), and 207–290 (NIPF…VLNG).

This sequence belongs to the mitochondrial carrier (TC 2.A.29) family.

The protein resides in the mitochondrion inner membrane. Its function is as follows. Mitochondrial transporter that mediates uptake of thiamine pyrophosphate (ThPP) into mitochondria. In Meyerozyma guilliermondii (strain ATCC 6260 / CBS 566 / DSM 6381 / JCM 1539 / NBRC 10279 / NRRL Y-324) (Yeast), this protein is Mitochondrial thiamine pyrophosphate carrier 1 (TPC1).